Reading from the N-terminus, the 422-residue chain is Glucose-1-phosphate adenylyltransferase 2 (422 aa).

Residues Tyr-110, Gly-175, 190–191 (EK), and Ser-208 contribute to the alpha-D-glucose 1-phosphate site.

Belongs to the bacterial/plant glucose-1-phosphate adenylyltransferase family. In terms of assembly, homotetramer.

It carries out the reaction alpha-D-glucose 1-phosphate + ATP + H(+) = ADP-alpha-D-glucose + diphosphate. The protein operates within glycan biosynthesis; glycogen biosynthesis. Involved in the biosynthesis of ADP-glucose, a building block required for the elongation reactions to produce glycogen. Catalyzes the reaction between ATP and alpha-D-glucose 1-phosphate (G1P) to produce pyrophosphate and ADP-Glc. The sequence is that of Glucose-1-phosphate adenylyltransferase 2 from Alkalilimnicola ehrlichii (strain ATCC BAA-1101 / DSM 17681 / MLHE-1).